The primary structure comprises 706 residues: Polycomb protein SCMH1 (706 aa).

2 MBT repeats span residues 28-126 (FTWD…LQPP) and 134-235 (SSWP…LQPP). Disordered stretches follow at residues 233-350 (QPPG…TVPS) and 576-595 (GSDR…RDPS). 2 stretches are compositionally biased toward basic residues: residues 272 to 283 (RGRKPGKKRGRT) and 304 to 319 (FPKK…RKPR). A compositionally biased stretch (low complexity) spans 329–340 (PTTSTPEPDTST). Residues 576 to 591 (GSDRHLESRDPPRLSG) are compositionally biased toward basic and acidic residues. One can recognise an SAM domain in the interval 597–662 (WTVEDVMQFV…SFHIDRLKQV (66 aa)).

Belongs to the SCM family. In terms of assembly, associates with a PRC1-like complex. Interacts with the SAM domain of PHC1 via its SAM domain in vitro. Most abundant in testis. Moderate levels detected in heart, brain, lung, liver, skeletal muscle and kidney and lower levels in spleen.

The protein resides in the nucleus. Its function is as follows. Associates with Polycomb group (PcG) multiprotein complexes; the complex class is required to maintain the transcriptionally repressive state of some genes. In Mus musculus (Mouse), this protein is Polycomb protein SCMH1.